Consider the following 158-residue polypeptide: Large ribosomal subunit protein uL22 (158 aa).

The protein belongs to the universal ribosomal protein uL22 family. As to quaternary structure, part of the 50S ribosomal subunit.

This protein binds specifically to 23S rRNA. It makes multiple contacts with different domains of the 23S rRNA in the assembled 50S subunit and ribosome. Its function is as follows. The globular domain of the protein is located near the polypeptide exit tunnel on the outside of the subunit, while an extended beta-hairpin is found that lines the wall of the exit tunnel in the center of the 70S ribosome. This Haloquadratum walsbyi (strain DSM 16790 / HBSQ001) protein is Large ribosomal subunit protein uL22.